A 330-amino-acid chain; its full sequence is 7,8-didemethyl-8-hydroxy-5-deazariboflavin synthase (330 aa).

Residues 13 to 253 (VTFSKNAFIP…EDISIQVPPN (241 aa)) enclose the Radical SAM core domain. [4Fe-4S] cluster contacts are provided by cysteine 27, cysteine 31, and cysteine 34.

The protein belongs to the radical SAM superfamily. CofG family. In terms of assembly, consists of two subunits, CofG and CofH. Requires [4Fe-4S] cluster as cofactor.

It carries out the reaction 5-amino-5-(4-hydroxybenzyl)-6-(D-ribitylimino)-5,6-dihydrouracil + S-adenosyl-L-methionine = 7,8-didemethyl-8-hydroxy-5-deazariboflavin + 5'-deoxyadenosine + L-methionine + NH4(+) + H(+). It functions in the pathway cofactor biosynthesis; coenzyme F0 biosynthesis. In terms of biological role, catalyzes the radical-mediated synthesis of 7,8-didemethyl-8-hydroxy-5-deazariboflavin from 5-amino-5-(4-hydroxybenzyl)-6-(D-ribitylimino)-5,6-dihydrouracil. In Methanococcus maripaludis (strain DSM 14266 / JCM 13030 / NBRC 101832 / S2 / LL), this protein is 7,8-didemethyl-8-hydroxy-5-deazariboflavin synthase.